We begin with the raw amino-acid sequence, 254 residues long: Pyridoxine 5'-phosphate synthase (254 aa).

Residue Asn12 coordinates 3-amino-2-oxopropyl phosphate. 14–15 (DH) serves as a coordination point for 1-deoxy-D-xylulose 5-phosphate. A 3-amino-2-oxopropyl phosphate-binding site is contributed by Arg23. Residue His48 is the Proton acceptor of the active site. The 1-deoxy-D-xylulose 5-phosphate site is built by Arg50 and His55. The Proton acceptor role is filled by Glu75. Thr105 is a binding site for 1-deoxy-D-xylulose 5-phosphate. His199 acts as the Proton donor in catalysis. 3-amino-2-oxopropyl phosphate contacts are provided by residues Gly200 and 221–222 (GF).

It belongs to the PNP synthase family. Homooctamer; tetramer of dimers.

It is found in the cytoplasm. It carries out the reaction 3-amino-2-oxopropyl phosphate + 1-deoxy-D-xylulose 5-phosphate = pyridoxine 5'-phosphate + phosphate + 2 H2O + H(+). It participates in cofactor biosynthesis; pyridoxine 5'-phosphate biosynthesis; pyridoxine 5'-phosphate from D-erythrose 4-phosphate: step 5/5. In terms of biological role, catalyzes the complicated ring closure reaction between the two acyclic compounds 1-deoxy-D-xylulose-5-phosphate (DXP) and 3-amino-2-oxopropyl phosphate (1-amino-acetone-3-phosphate or AAP) to form pyridoxine 5'-phosphate (PNP) and inorganic phosphate. This Rhodopseudomonas palustris (strain ATCC BAA-98 / CGA009) protein is Pyridoxine 5'-phosphate synthase.